The following is a 372-amino-acid chain: O-glycoside alpha-1,2-mannosyltransferase homolog 2 (372 aa).

At 1–6 (MRISRL) the chain is on the cytoplasmic side. Residues 7 to 27 (LIRVLLGFVILFITYILFPSI) traverse the membrane as a helical; Signal-anchor for type II membrane protein segment. The Lumenal portion of the chain corresponds to 28–372 (PKALVNTLNV…NLTNEDYDEL (345 aa)). Residue E271 is the Nucleophile of the active site.

The protein belongs to the glycosyltransferase 15 family.

It is found in the endoplasmic reticulum membrane. Probable mannosyltransferase involved in O-glycosylation of cell wall and secreted proteins. The chain is O-glycoside alpha-1,2-mannosyltransferase homolog 2 (omh2) from Schizosaccharomyces pombe (strain 972 / ATCC 24843) (Fission yeast).